The following is a 544-amino-acid chain: Chaperonin GroEL 1 (544 aa).

Residues 29–32 (TLGP), 86–90 (DGTTT), G413, 479–481 (NAA), and D495 contribute to the ATP site. The disordered stretch occupies residues 525 to 544 (PEPKDNAPAGAGAGGGDFDY). Residues 535 to 544 (AGAGGGDFDY) are compositionally biased toward gly residues.

The protein belongs to the chaperonin (HSP60) family. As to quaternary structure, forms a cylinder of 14 subunits composed of two heptameric rings stacked back-to-back. Interacts with the co-chaperonin GroES.

Its subcellular location is the cytoplasm. It carries out the reaction ATP + H2O + a folded polypeptide = ADP + phosphate + an unfolded polypeptide.. Its function is as follows. Together with its co-chaperonin GroES, plays an essential role in assisting protein folding. The GroEL-GroES system forms a nano-cage that allows encapsulation of the non-native substrate proteins and provides a physical environment optimized to promote and accelerate protein folding. This is Chaperonin GroEL 1 from Nostoc sp. (strain PCC 7120 / SAG 25.82 / UTEX 2576).